We begin with the raw amino-acid sequence, 489 residues long: Ribulose bisphosphate carboxylase large chain (489 aa).

Substrate is bound by residues Asn-128 and Thr-178. Lys-180 (proton acceptor) is an active-site residue. Lys-182 is a binding site for substrate. 3 residues coordinate Mg(2+): Lys-206, Asp-208, and Glu-209. The residue at position 206 (Lys-206) is an N6-carboxylysine. His-298 (proton acceptor) is an active-site residue. Substrate contacts are provided by Arg-299, His-331, and Ser-383.

Belongs to the RuBisCO large chain family. Type I subfamily. As to quaternary structure, heterohexadecamer of 8 large chains and 8 small chains. Mg(2+) is required as a cofactor.

It catalyses the reaction 2 (2R)-3-phosphoglycerate + 2 H(+) = D-ribulose 1,5-bisphosphate + CO2 + H2O. The enzyme catalyses D-ribulose 1,5-bisphosphate + O2 = 2-phosphoglycolate + (2R)-3-phosphoglycerate + 2 H(+). Functionally, ruBisCO catalyzes two reactions: the carboxylation of D-ribulose 1,5-bisphosphate, the primary event in carbon dioxide fixation, as well as the oxidative fragmentation of the pentose substrate. Both reactions occur simultaneously and in competition at the same active site. This chain is Ribulose bisphosphate carboxylase large chain, found in Nitrosospira sp. (strain 40KI).